The primary structure comprises 150 residues: Arginine repressor (150 aa).

Belongs to the ArgR family.

Its subcellular location is the cytoplasm. It functions in the pathway amino-acid biosynthesis; L-arginine biosynthesis [regulation]. Its function is as follows. Regulates arginine biosynthesis genes. This chain is Arginine repressor, found in Psychromonas ingrahamii (strain DSM 17664 / CCUG 51855 / 37).